We begin with the raw amino-acid sequence, 235 residues long: MAQTLNRSLTDLGALLHLVDPTLPIGGFNHSNGLETFVQQRVVESKATLEEYVQTQLLQNWIYNDGAYLSLAFDAMNEGNFDRLCELDWQLSATKVARESREGSFKLGVRLLKIFIRYETHALLTAYQKAIAEKRVQGYFPIVFAMVAQAMGLTKADTLYAFYYNAAVGVITNGVKLIPLSQMDGQDILFDLRGSLVQAVELSFDPDEEWLGAATLANDIRAMQHEVLYTRLYMS.

The protein belongs to the UreF family. In terms of assembly, ureD, UreF and UreG form a complex that acts as a GTP-hydrolysis-dependent molecular chaperone, activating the urease apoprotein by helping to assemble the nickel containing metallocenter of UreC. The UreE protein probably delivers the nickel.

Its subcellular location is the cytoplasm. Its function is as follows. Required for maturation of urease via the functional incorporation of the urease nickel metallocenter. The protein is Urease accessory protein UreF of Haemophilus influenzae (strain PittGG).